We begin with the raw amino-acid sequence, 66 residues long: Large ribosomal subunit protein bL31 (66 aa).

Residues cysteine 16, cysteine 18, cysteine 36, and cysteine 39 each contribute to the Zn(2+) site.

This sequence belongs to the bacterial ribosomal protein bL31 family. Type A subfamily. As to quaternary structure, part of the 50S ribosomal subunit. Zn(2+) is required as a cofactor.

Binds the 23S rRNA. The sequence is that of Large ribosomal subunit protein bL31 from Thermodesulfovibrio yellowstonii (strain ATCC 51303 / DSM 11347 / YP87).